Consider the following 284-residue polypeptide: Bifunctional protein FolD (284 aa).

Residues 165–167 (GRG), T192, and V233 each bind NADP(+).

This sequence belongs to the tetrahydrofolate dehydrogenase/cyclohydrolase family. In terms of assembly, homodimer.

The enzyme catalyses (6R)-5,10-methylene-5,6,7,8-tetrahydrofolate + NADP(+) = (6R)-5,10-methenyltetrahydrofolate + NADPH. It carries out the reaction (6R)-5,10-methenyltetrahydrofolate + H2O = (6R)-10-formyltetrahydrofolate + H(+). Its pathway is one-carbon metabolism; tetrahydrofolate interconversion. In terms of biological role, catalyzes the oxidation of 5,10-methylenetetrahydrofolate to 5,10-methenyltetrahydrofolate and then the hydrolysis of 5,10-methenyltetrahydrofolate to 10-formyltetrahydrofolate. The protein is Bifunctional protein FolD of Corynebacterium efficiens (strain DSM 44549 / YS-314 / AJ 12310 / JCM 11189 / NBRC 100395).